Reading from the N-terminus, the 75-residue chain is uncharacterized protein (75 aa).

2 helical membrane-spanning segments follow: residues 7-26 (LINA…AASA) and 36-58 (MHLF…FCPV).

The protein localises to the cell membrane. This is an uncharacterized protein from Bacillus subtilis (strain 168).